We begin with the raw amino-acid sequence, 925 residues long: Neuropilin-2 (925 aa).

The N-terminal stretch at 1–22 (MDMFPLTWIFLALYFSGHKVRS) is a signal peptide. Over 23-858 (QQDPPCGGRL…EKSWLYTLDP (836 aa)) the chain is Extracellular. Disulfide bonds link cysteine 28–cysteine 55, cysteine 83–cysteine 105, and cysteine 149–cysteine 175. CUB domains are found at residues 28–142 (CGGR…YEIF) and 149–267 (CSKN…YYLV). 2 N-linked (GlcNAc...) asparagine glycosylation sites follow: asparagine 152 and asparagine 157. Ca(2+)-binding residues include glutamate 197, aspartate 211, and aspartate 252. Cysteine 208 and cysteine 230 are joined by a disulfide. Intrachain disulfides connect cysteine 277–cysteine 427 and cysteine 434–cysteine 592. F5/8 type C domains lie at 277-427 (CNAP…LFGC) and 434-592 (CSNM…VLGC). Polar residues predominate over residues 297–310 (STFSDGRWTPQQSR). The segment at 297–317 (STFSDGRWTPQQSRLHGDDNG) is disordered. The interval 601–621 (VETLGPTVKSEETTTPYPMDE) is disordered. A glycan (N-linked (GlcNAc...) asparagine) is linked at asparagine 629. The region spanning 642-802 (SGFNCNFDFP…TDVPLENCME (161 aa)) is the MAM domain. Over residues 820-830 (YEDEIDDDYEG) the composition is skewed to acidic residues. Positions 820–849 (YEDEIDDDYEGDWNNSSSTSGAGSPSSGKE) are disordered. N-linked (GlcNAc...) asparagine glycosylation is found at asparagine 833 and asparagine 834. A compositionally biased stretch (low complexity) spans 835–846 (SSSTSGAGSPSS). A helical transmembrane segment spans residues 859 to 883 (ILITIIAMSSLGVLLGATCAGLLLY). The Cytoplasmic portion of the chain corresponds to 884–925 (CTCSYSGLSSRSCTTLENYNFELYDGLKHKVKINHQKCCSEA).

This sequence belongs to the neuropilin family. In terms of assembly, heterodimer with NRP1. Binds PLXNB1. In terms of tissue distribution, found in certain neuronal populations of the CNS, including dorsal root ganglia, and in other non-neuronal tissues including mesenchymal tissue lining in the ribs.

It is found in the membrane. In terms of biological role, high affinity receptor for semaphorins 3C, 3F, VEGF-165 and VEGF-145 isoforms of VEGF, and the PLGF-2 isoform of PGF. In Rattus norvegicus (Rat), this protein is Neuropilin-2 (Nrp2).